The chain runs to 130 residues: Insulin-like growth factor 1 (130 aa).

A signal peptide spans 1 to 25 (MHAVSSSHLFYLAFCLLVLTSSATA). The tract at residues 26-54 (GPETLCGAELVDALQFVCGDRGFYFNKPT) is b. Cystine bridges form between Cys31–Cys73, Cys43–Cys86, and Cys72–Cys77. Positions 55–66 (GYGSSSRRAPQT) are c. Positions 67 to 87 (GIVDECCFRSCDLRRLEMYCA) are a. Residues 88-95 (PLKPAKSA) are d. Residues 96-130 (RSVRAQRHTDMPKTQKEVHLKNASRGSAGNKNYRM) constitute a propeptide, e peptide. Residues 97 to 130 (SVRAQRHTDMPKTQKEVHLKNASRGSAGNKNYRM) form a disordered region. Positions 102 to 115 (RHTDMPKTQKEVHL) are enriched in basic and acidic residues. Residues 119-130 (SRGSAGNKNYRM) are compositionally biased toward polar residues.

It belongs to the insulin family. As to quaternary structure, forms a ternary complex with IGFR1 and ITGAV:ITGB3. Forms a ternary complex with IGFR1 and ITGA6:ITGB4. Forms a ternary complex with IGFBP3 and ALS.

It localises to the secreted. Functionally, the insulin-like growth factors, isolated from plasma, are structurally and functionally related to insulin but have a much higher growth-promoting activity. May be a physiological regulator of [1-14C]-2-deoxy-D-glucose (2DG) transport and glycogen synthesis in osteoblasts. Stimulates glucose transport in bone-derived osteoblastic (PyMS) cells and is effective at much lower concentrations than insulin, not only regarding glycogen and DNA synthesis but also with regard to enhancing glucose uptake. May play a role in synapse maturation. Ca(2+)-dependent exocytosis of IGF1 is required for sensory perception of smell in the olfactory bulb. Acts as a ligand for IGF1R. Binds to the alpha subunit of IGF1R, leading to the activation of the intrinsic tyrosine kinase activity which autophosphorylates tyrosine residues in the beta subunit thus initiating a cascade of down-stream signaling events leading to activation of the PI3K-AKT/PKB and the Ras-MAPK pathways. Binds to integrins ITGAV:ITGB3 and ITGA6:ITGB4. Its binding to integrins and subsequent ternary complex formation with integrins and IGFR1 are essential for IGF1 signaling. Induces the phosphorylation and activation of IGFR1, MAPK3/ERK1, MAPK1/ERK2 and AKT1. As part of the MAPK/ERK signaling pathway, acts as a negative regulator of apoptosis in cardiomyocytes via promotion of STUB1/CHIP-mediated ubiquitination and degradation of ICER-type isoforms of CREM. The sequence is that of Insulin-like growth factor 1 from Cavia porcellus (Guinea pig).